Reading from the N-terminus, the 450-residue chain is UDP-N-acetylmuramoylalanine--D-glutamate ligase (450 aa).

Residue 119–125 participates in ATP binding; the sequence is GSNGKTT.

The protein belongs to the MurCDEF family.

It localises to the cytoplasm. It carries out the reaction UDP-N-acetyl-alpha-D-muramoyl-L-alanine + D-glutamate + ATP = UDP-N-acetyl-alpha-D-muramoyl-L-alanyl-D-glutamate + ADP + phosphate + H(+). It functions in the pathway cell wall biogenesis; peptidoglycan biosynthesis. Its function is as follows. Cell wall formation. Catalyzes the addition of glutamate to the nucleotide precursor UDP-N-acetylmuramoyl-L-alanine (UMA). This chain is UDP-N-acetylmuramoylalanine--D-glutamate ligase, found in Bacillus mycoides (strain KBAB4) (Bacillus weihenstephanensis).